A 155-amino-acid chain; its full sequence is 3-hydroxyacyl-[acyl-carrier-protein] dehydratase FabZ (155 aa).

Residue His54 is part of the active site.

Belongs to the thioester dehydratase family. FabZ subfamily.

Its subcellular location is the cytoplasm. The enzyme catalyses a (3R)-hydroxyacyl-[ACP] = a (2E)-enoyl-[ACP] + H2O. Its function is as follows. Involved in unsaturated fatty acids biosynthesis. Catalyzes the dehydration of short chain beta-hydroxyacyl-ACPs and long chain saturated and unsaturated beta-hydroxyacyl-ACPs. The sequence is that of 3-hydroxyacyl-[acyl-carrier-protein] dehydratase FabZ from Burkholderia mallei (strain NCTC 10247).